The primary structure comprises 332 residues: Glyceraldehyde-3-phosphate dehydrogenase (332 aa).

NAD(+) contacts are provided by residues 10 to 11 (RI), aspartate 36, lysine 81, and serine 116. D-glyceraldehyde 3-phosphate-binding positions include 150–152 (SCT), threonine 181, arginine 197, 210–211 (TK), and arginine 233. Cysteine 151 acts as the Nucleophile in catalysis. Asparagine 314 lines the NAD(+) pocket.

This sequence belongs to the glyceraldehyde-3-phosphate dehydrogenase family. In terms of assembly, homotetramer.

It localises to the cytoplasm. It carries out the reaction D-glyceraldehyde 3-phosphate + phosphate + NAD(+) = (2R)-3-phospho-glyceroyl phosphate + NADH + H(+). Its pathway is carbohydrate degradation; glycolysis; pyruvate from D-glyceraldehyde 3-phosphate: step 1/5. Catalyzes the oxidative phosphorylation of glyceraldehyde 3-phosphate (G3P) to 1,3-bisphosphoglycerate (BPG) using the cofactor NAD. The first reaction step involves the formation of a hemiacetal intermediate between G3P and a cysteine residue, and this hemiacetal intermediate is then oxidized to a thioester, with concomitant reduction of NAD to NADH. The reduced NADH is then exchanged with the second NAD, and the thioester is attacked by a nucleophilic inorganic phosphate to produce BPG. This chain is Glyceraldehyde-3-phosphate dehydrogenase (gapA), found in Helicobacter pylori (strain J99 / ATCC 700824) (Campylobacter pylori J99).